A 436-amino-acid chain; its full sequence is MTTTLFSSRIIQSALDFDVYKVNMMSAVAALYPDAMVSYKFIVRSEEDLSELLPEVKAEVLKLQDVRFTEDEIAYMKRVAPYLKPEFVEALRHFRFNPQSDVSFHNKTMSDGSSQLRITINGLWKETILYETIIMSIVSEVRSRQRWSDIPFEQFQTVLEDKVRYLKAELERRNITNFKFADMSTRRRFSFQAQRTMLEYLSKELPQCLTGTSNYHLARELDLTPIGTVAHEWFMGHQALVNVRDSQKIALQRWQKMFNGALGIALTDTIGIDAFLKDFDEELSHAYVGVRHDSGCPFTWGEKMIAHYESLGIDPMTKTLVFTDGLNFEQALDICEHFQGRVQVSFGIGTSLANDMGNYVNDQGEAYQPLSIVIKMVTCNGSPVAKISDEPEKAMCEDIFFLMNLKRRFEQPLDLNECRKLIDRLESEGQNYLIDA.

Histidine 231 is subject to Phosphohistidine; by autocatalysis.

Belongs to the NAPRTase family. Post-translationally, transiently phosphorylated on a His residue during the reaction cycle. Phosphorylation strongly increases the affinity for substrates and increases the rate of nicotinate D-ribonucleotide production. Dephosphorylation regenerates the low-affinity form of the enzyme, leading to product release.

It catalyses the reaction nicotinate + 5-phospho-alpha-D-ribose 1-diphosphate + ATP + H2O = nicotinate beta-D-ribonucleotide + ADP + phosphate + diphosphate. It functions in the pathway cofactor biosynthesis; NAD(+) biosynthesis; nicotinate D-ribonucleotide from nicotinate: step 1/1. In terms of biological role, catalyzes the synthesis of beta-nicotinate D-ribonucleotide from nicotinate and 5-phospho-D-ribose 1-phosphate at the expense of ATP. The sequence is that of Nicotinate phosphoribosyltransferase from Vibrio parahaemolyticus serotype O3:K6 (strain RIMD 2210633).